Consider the following 444-residue polypeptide: Tol-Pal system protein TolB (444 aa).

Residues 1–18 (MKNIIYCILLLFSFNSYA) form the signal peptide.

The protein belongs to the TolB family. In terms of assembly, the Tol-Pal system is composed of five core proteins: the inner membrane proteins TolA, TolQ and TolR, the periplasmic protein TolB and the outer membrane protein Pal. They form a network linking the inner and outer membranes and the peptidoglycan layer.

It is found in the periplasm. In terms of biological role, part of the Tol-Pal system, which plays a role in outer membrane invagination during cell division and is important for maintaining outer membrane integrity. This Rickettsia bellii (strain OSU 85-389) protein is Tol-Pal system protein TolB.